A 155-amino-acid polypeptide reads, in one-letter code: Ribonuclease H (155 aa).

An RNase H type-1 domain is found at 1 to 143 (MNQVEIYTDG…ADALANRGVD (143 aa)). The Mg(2+) site is built by D9, E47, D69, and D135.

Belongs to the RNase H family. Monomer. Requires Mg(2+) as cofactor.

The protein localises to the cytoplasm. The enzyme catalyses Endonucleolytic cleavage to 5'-phosphomonoester.. Its function is as follows. Endonuclease that specifically degrades the RNA of RNA-DNA hybrids. This chain is Ribonuclease H, found in Verminephrobacter eiseniae (strain EF01-2).